The chain runs to 86 residues: Stage V sporulation protein S (86 aa).

Its function is as follows. Interferes with sporulation at an early stage. Seems to play a positive role in allowing cells to progress beyond stage V of sporulation. The polypeptide is Stage V sporulation protein S (Bacillus subtilis (strain 168)).